The sequence spans 711 residues: Amino-acid racemase (711 aa).

Topologically, residues Met-1 to Arg-14 are cytoplasmic. Residues Phe-15–Thr-35 form a helical membrane-spanning segment. At Gly-36–Asn-37 the chain is on the extracellular side. A helical membrane pass occupies residues Phe-38–Phe-58. Residues Phe-59–Thr-78 lie on the Cytoplasmic side of the membrane. The helical transmembrane segment at Thr-79–Phe-99 threads the bilayer. The Extracellular portion of the chain corresponds to Lys-100–Thr-117. The helical transmembrane segment at Leu-118–Val-138 threads the bilayer. At Lys-139 to Ala-146 the chain is on the cytoplasmic side. A helical membrane pass occupies residues Phe-147–Val-167. The Extracellular segment spans residues Lys-168–Arg-188. Residues Asn-189 to Asn-209 form a helical membrane-spanning segment. Residues Arg-210–His-241 lie on the Cytoplasmic side of the membrane. A helical transmembrane segment spans residues Asp-242–Phe-262. Over Arg-263–Ser-306 the chain is Extracellular. The helical transmembrane segment at Leu-307–Leu-327 threads the bilayer. The Cytoplasmic segment spans residues Leu-328–Ala-711. Residues Ala-336–Ala-711 form a racemase region. The active-site Proton acceptor is the Lys-376. Lys-376 carries the N6-(pyridoxal phosphate)lysine modification. A substrate-binding site is contributed by Arg-470. Residue Tyr-602 is the Proton acceptor of the active site. Met-651 lines the substrate pocket.

In the N-terminal section; belongs to the acyltransferase 3 family. This sequence in the C-terminal section; belongs to the alanine racemase family. Pyridoxal 5'-phosphate serves as cofactor.

It localises to the cell membrane. In Enterococcus faecalis (Streptococcus faecalis), this protein is Amino-acid racemase (vanTG).